A 588-amino-acid polypeptide reads, in one-letter code: Sentrin-specific protease 2 (588 aa).

A Nuclear localization signal motif is present at residues 28–31 (KRRR). At serine 32 the chain carries Phosphoserine. The Nuclear localization signal motif lies at 47–52 (PAKRPR). The segment at 72–381 (GFPFQLTTKP…EKEISNALGH (310 aa)) is axin-binding. A disordered region spans residues 157-184 (EGYNRRPSGRRHSKSNPESSLPWKPQEQ). The short motif at 316–331 (LEPDLSEEVSARLRLG) is the Nuclear export signal element. 2 positions are modified to phosphoserine: serine 332 and serine 343. A protease region spans residues 394–558 (LRITRGDIQT…MFTCKYADYI (165 aa)). Catalysis depends on residues histidine 477 and aspartate 494. Residue cysteine 547 is the Nucleophile of the active site.

Belongs to the peptidase C48 family. In terms of assembly, binds to SUMO2 and SUMO3. Interacts with the C-terminal domain of NUP153 via its N-terminus. Interacts with MTA1. Binds to AXIN1. In terms of processing, polyubiquitinated; which leads to proteasomal degradation. Ubiquitous. Highly expressed in brain, lung and testis.

It localises to the nucleus. The protein localises to the nuclear pore complex. The protein resides in the nucleus membrane. Its subcellular location is the cytoplasm. Functionally, protease that catalyzes two essential functions in the SUMO pathway. The first is the hydrolysis of an alpha-linked peptide bond at the C-terminal end of the small ubiquitin-like modifier (SUMO) propeptides, SUMO1, SUMO2 and SUMO3 leading to the mature form of the proteins. The second is the deconjugation of SUMO1, SUMO2 and SUMO3 from targeted proteins, by cleaving an epsilon-linked peptide bond between the C-terminal glycine of the mature SUMO and the lysine epsilon-amino group of the target protein. May down-regulate CTNNB1 levels and thereby modulate the Wnt pathway. Deconjugates SUMO2 from MTA1. Plays a dynamic role in adipogenesis by desumoylating and promoting the stabilization of CEBPB. Acts as a regulator of the cGAS-STING pathway by catalyzing desumoylation of CGAS and STING1 during the late phase of viral infection. In Rattus norvegicus (Rat), this protein is Sentrin-specific protease 2 (Senp2).